The primary structure comprises 352 residues: Organic solute transporter subunit alpha (352 aa).

The Extracellular segment spans residues 1–45; sequence MDVAHPEEVTRFSPDILMEKFNVSEACFLPPPISIQLILQLTWLD. N-linked (GlcNAc...) asparagine glycosylation occurs at Asn22. A helical membrane pass occupies residues 46–66; it reads IGVFAALTAMTVLTIAIYLEI. Over 67–82 the chain is Cytoplasmic; it reads VCYLMDKVKCPIKRKT. Residues 83–103 traverse the membrane as a helical segment; it reads LMWNSAAPTVIAITSCLGLWV. Topologically, residues 104-108 are extracellular; sequence PRAIM. A helical membrane pass occupies residues 109–129; it reads FVDMAAAMYFGVGFYLMLLII. The Cytoplasmic segment spans residues 130–173; that stretch reads VQGYGGEEAMLQHLATHTIRISTGPCCCCCPCLPHIHLTRQKYK. A helical transmembrane segment spans residues 174–194; that stretch reads IFVLGAFQVAFLRPALFLLGV. At 195–210 the chain is on the extracellular side; the sequence is VLWTNGLYDPDDWSST. A helical transmembrane segment spans residues 211-231; it reads SIFLWLNLFLGVSTILGLWPV. Over 232-250 the chain is Cytoplasmic; sequence NVLFRHSKVLMADQKLTCK. The helical transmembrane segment at 251–271 threads the bilayer; sequence FALFQAILILSSLQNSIIGTL. Topologically, residues 272–294 are extracellular; that stretch reads AGAGHIGCAPPYSARTRGQQMNN. A helical membrane pass occupies residues 295-312; it reads QLLIIEMFFVGILTRISY. Residues 313-352 are Cytoplasmic-facing; the sequence is RKRDDRPGHRHVGEVQQIVRECDQPAIADQQADHSSISHI.

This sequence belongs to the OST-alpha family. Interacts with slc51b. The Ost-alpha/Ost-beta complex is a heterodimer composed of alpha (slc51a) and beta (slc51b) subunit. Expressed in liver.

Its subcellular location is the cell membrane. The protein resides in the endoplasmic reticulum membrane. It catalyses the reaction taurocholate(out) = taurocholate(in). The enzyme catalyses prostaglandin E2(out) = prostaglandin E2(in). The catalysed reaction is estrone 3-sulfate(out) = estrone 3-sulfate(in). It carries out the reaction dehydroepiandrosterone 3-sulfate(out) = dehydroepiandrosterone 3-sulfate(in). It catalyses the reaction tauroursodeoxycholate(out) = tauroursodeoxycholate(in). The enzyme catalyses glycoursodeoxycholate(out) = glycoursodeoxycholate(in). The catalysed reaction is glycocholate(out) = glycocholate(in). It carries out the reaction taurochenodeoxycholate(out) = taurochenodeoxycholate(in). It catalyses the reaction glycochenodeoxycholate(out) = glycochenodeoxycholate(in). The enzyme catalyses taurodeoxycholate(out) = taurodeoxycholate(in). The catalysed reaction is glycodeoxycholate(out) = glycodeoxycholate(in). Functionally, essential component of the Ost-alpha/Ost-beta complex, a heterodimer that acts as the intestinal basolateral transporter responsible for the translocation of bile acids (such as taurocholate), steroids (such as estrone sulfate), and eicosanoids (such as prostaglandin E2). This chain is Organic solute transporter subunit alpha (slc51a), found in Leucoraja erinaceus (Little skate).